The chain runs to 267 residues: Thymidylate synthase (267 aa).

Arg-24 is a binding site for dUMP. His-54 contributes to the (6R)-5,10-methylene-5,6,7,8-tetrahydrofolate binding site. 129–130 is a dUMP binding site; the sequence is RR. The active-site Nucleophile is Cys-149. Residues 169 to 172, Asn-180, and 210 to 212 contribute to the dUMP site; these read RSAD and HVY. Asp-172 is a binding site for (6R)-5,10-methylene-5,6,7,8-tetrahydrofolate. Ala-266 serves as a coordination point for (6R)-5,10-methylene-5,6,7,8-tetrahydrofolate.

Belongs to the thymidylate synthase family. Bacterial-type ThyA subfamily. As to quaternary structure, homodimer.

The protein resides in the cytoplasm. The catalysed reaction is dUMP + (6R)-5,10-methylene-5,6,7,8-tetrahydrofolate = 7,8-dihydrofolate + dTMP. The protein operates within pyrimidine metabolism; dTTP biosynthesis. In terms of biological role, catalyzes the reductive methylation of 2'-deoxyuridine-5'-monophosphate (dUMP) to 2'-deoxythymidine-5'-monophosphate (dTMP) while utilizing 5,10-methylenetetrahydrofolate (mTHF) as the methyl donor and reductant in the reaction, yielding dihydrofolate (DHF) as a by-product. This enzymatic reaction provides an intracellular de novo source of dTMP, an essential precursor for DNA biosynthesis. The chain is Thymidylate synthase from Paenarthrobacter aurescens (strain TC1).